The chain runs to 396 residues: L-lactate dehydrogenase (396 aa).

In terms of domain architecture, FMN hydroxy acid dehydrogenase spans 1–380 (MIISAASDYR…TQDSLVQGLG (380 aa)). Y24 is a binding site for substrate. S106 and Q127 together coordinate FMN. Y129 serves as a coordination point for substrate. T155 is a binding site for FMN. Position 164 (R164) interacts with substrate. K251 is a binding site for FMN. H275 serves as the catalytic Proton acceptor. R278 provides a ligand contact to substrate. 306 to 330 (DSGIRNGLDVVRMIALGADTILLGR) provides a ligand contact to FMN.

It belongs to the FMN-dependent alpha-hydroxy acid dehydrogenase family. Requires FMN as cofactor.

It localises to the cell inner membrane. It carries out the reaction (S)-lactate + A = pyruvate + AH2. Catalyzes the conversion of L-lactate to pyruvate. Is coupled to the respiratory chain. In Escherichia coli O81 (strain ED1a), this protein is L-lactate dehydrogenase.